We begin with the raw amino-acid sequence, 345 residues long: NADPH dehydrogenase (345 aa).

23-26 is an FMN binding site; that stretch reads SPMC. Residue Y28 coordinates substrate. 2 residues coordinate FMN: A60 and Q102. 164 to 167 contributes to the substrate binding site; it reads HGAH. FMN-binding positions include R215 and 307–308; that span reads GR.

This sequence belongs to the NADH:flavin oxidoreductase/NADH oxidase family. NamA subfamily. In terms of assembly, homotetramer. FMN serves as cofactor.

The enzyme catalyses A + NADPH + H(+) = AH2 + NADP(+). Its function is as follows. Catalyzes the reduction of the double bond of an array of alpha,beta-unsaturated aldehydes and ketones. It also reduces the nitro group of nitroester and nitroaromatic compounds. It could have a role in detoxification processes. In Bacillus cereus (strain B4264), this protein is NADPH dehydrogenase.